We begin with the raw amino-acid sequence, 170 residues long: MVGACMTIRPLVRYPDRRLAIPARPVTAFDDELRELAADLLDTMRAAPGIGITAPHIGVPLRVVVLELDAKDGARTYVNPEITWASPEMIMHREGSVSMPGVNDEVQRHARVRISYWDLDGTMQTEDSEALRAVCHQHEIDQLDGMFWIQRLSRLKRERLVKKFEKMSRG.

The active site involves E139.

This sequence belongs to the polypeptide deformylase family.

The polypeptide is Peptide deformylase-like (Bradyrhizobium diazoefficiens (strain JCM 10833 / BCRC 13528 / IAM 13628 / NBRC 14792 / USDA 110)).